A 1148-amino-acid chain; its full sequence is Signal transducer and activator of transcription B (1148 aa).

The segment covering 1–36 (MEVTNNGSNNSSTIASTNPPTSPSTTSTSKSLPPLS) has biased composition (low complexity). 5 disordered regions span residues 1 to 81 (MEVT…NNNN), 93 to 178 (SSSN…LSSS), 268 to 312 (NTNN…PSNG), 403 to 425 (KNNI…NSLL), and 453 to 645 (YDYN…KTVT). A compositionally biased stretch (polar residues) spans 37–47 (FLNSQWENKQS). Composition is skewed to low complexity over residues 48–81 (NNNN…NNNN), 106–178 (NNNN…LSSS), and 268–298 (NTNN…NNNN). Low complexity predominate over residues 466–517 (SNSSNNNSSNNNSNNNNNNNSNNNNNIIGSISPPHSSQLQQVSSPQQQQQQQ). Residues 525 to 541 (SISSGSIKDLINSPNKE) are compositionally biased toward polar residues. The segment covering 544–557 (SKSQYPSSLSQSSS) has biased composition (low complexity). Residues 561 to 572 (MDTDVDSTDEFD) show a composition bias toward acidic residues. The span at 574 to 610 (GSNSNNNNNNNNNNNNNNNSNNSNNKKRNNSNNNNLG) shows a compositional bias: low complexity. Positions 997–1122 (WQNGFIFMFL…TIPVFKREPK (126 aa)) constitute an SH2 domain.

This sequence belongs to the transcription factor STAT family. In terms of assembly, homodimer. Does not form heterodimers with other family members.

The protein resides in the nucleus. In terms of biological role, transcription factor that regulates gene expression during development. Required for optimal cell growth. The protein is Signal transducer and activator of transcription B (dstB) of Dictyostelium discoideum (Social amoeba).